A 927-amino-acid polypeptide reads, in one-letter code: Small conductance calcium-activated potassium channel protein (927 aa).

Over residues 1-31 (MSIQKLNDTTNSGYVSSEETDSLLVSSSNPS) the composition is skewed to polar residues. Disordered regions lie at residues 1-131 (MSIQ…EDVE), 181-251 (LSLK…VKSA), and 296-336 (HLHQ…SSST). Residues 45 to 62 (SNSTNGPTTGASTSSSGS) are compositionally biased toward low complexity. Over residues 63 to 77 (VSGGGGGSGSGGGSA) the composition is skewed to gly residues. Polar residues-rich tracts occupy residues 95–107 (TSTY…QSQH) and 200–214 (NLGT…SSIP). Low complexity-rich tracts occupy residues 219–232 (SRCR…RRAS) and 296–308 (HLHQ…SQQQ). A compositionally biased stretch (polar residues) spans 314–336 (ITSSPTNGSRIIRQSSQPESSST). The chain crosses the membrane as a helical span at residues 489–509 (ALVMGMFGIIVMVIENELSSA). The helical transmembrane segment at 530 to 550 (TVILLGLIVAYHALEVQLFMI) threads the bilayer. The chain crosses the membrane as a helical span at residues 569-589 (IGLELFICAIHPIPGEYYFQW). A helical membrane pass occupies residues 609-629 (VALSLPMFLRLYLICRVMLLH). The helical transmembrane segment at 658–678 (LMTICPGTVLLVFMVSLWIIA) threads the bilayer. The segment at residues 696–716 (LLNSMWLTAITFLCVGYGDIV) is an intramembrane region (pore-forming). A helical membrane pass occupies residues 724 to 744 (GITLTCGMVGAGCTALLVAVV). Positions 763–839 (DTQLTKRLKN…ITDMAKTQNT (77 aa)) are calmodulin-binding.

The protein belongs to the potassium channel KCNN family. SK subfamily. Heterooligomer. The complex is composed of 4 channel subunits each of which binds to a calmodulin subunit which regulates the channel activity through calcium-binding.

Its subcellular location is the membrane. Functionally, forms a voltage-independent potassium channel activated by intracellular calcium. Activation is followed by membrane hyperpolarization. Thought to regulate neuronal excitability by contributing to the slow component of synaptic afterhyperpolarization. The channel is blocked by apamin. This chain is Small conductance calcium-activated potassium channel protein, found in Drosophila melanogaster (Fruit fly).